Consider the following 356-residue polypeptide: tRNA-specific 2-thiouridylase MnmA (356 aa).

Residues 6–13 (AMSGGVDS) and Leu32 contribute to the ATP site. Cys101 (nucleophile) is an active-site residue. A disulfide bond links Cys101 and Cys193. Gly125 is an ATP binding site. The interaction with tRNA stretch occupies residues 143 to 145 (KDQ). Cys193 serves as the catalytic Cysteine persulfide intermediate.

It belongs to the MnmA/TRMU family.

Its subcellular location is the cytoplasm. It carries out the reaction S-sulfanyl-L-cysteinyl-[protein] + uridine(34) in tRNA + AH2 + ATP = 2-thiouridine(34) in tRNA + L-cysteinyl-[protein] + A + AMP + diphosphate + H(+). Its function is as follows. Catalyzes the 2-thiolation of uridine at the wobble position (U34) of tRNA, leading to the formation of s(2)U34. The chain is tRNA-specific 2-thiouridylase MnmA from Mycolicibacterium smegmatis (strain ATCC 700084 / mc(2)155) (Mycobacterium smegmatis).